A 249-amino-acid chain; its full sequence is MFHGKHPEGLSERGRALLLEGGKALGLDLKPHLEAFSRLYALLQEASGKVNLTALRGEEEVVVKHFLDSLTLLRLPLWQGPLRVLDLGTGAGFPGLPLKIVRPELELVLVDATRKKVAFVERAIEVLGLKGARALWGRAEVLAREAGHREAYDRAVARAVAPLCVLSELLLPFLEVGGAAVAMKGPRVEEELAPLPPALERLGGRLGEVLALQLPLSGEARHLVVLEKAAPTPPAYPRRPGVPERYPLC.

Residues Gly88, Phe93, 111–113 (DAT), 139–140 (AE), and Arg158 each bind S-adenosyl-L-methionine.

Belongs to the methyltransferase superfamily. RNA methyltransferase RsmG family.

The protein localises to the cytoplasm. In terms of biological role, specifically methylates the N7 position of a guanine in 16S rRNA. The protein is Ribosomal RNA small subunit methyltransferase G of Thermus thermophilus (strain ATCC BAA-163 / DSM 7039 / HB27).